Here is a 247-residue protein sequence, read N- to C-terminus: Large ribosomal subunit protein uL30 (247 aa).

Methionine 1 carries the post-translational modification N-acetylmethionine. 4 tandem repeats follow at residues 7 to 17, 18 to 29, 30 to 41, and 42 to 53. The segment at 7-53 is 4 X 12 AA tandem repeats; it reads KKKVPAVPETLKKKRRNFAELKIKRLRKKFAQKMLRKARRKLIYEKA. At threonine 16 the chain carries Phosphothreonine. Lysine 123 bears the N6-acetyllysine mark. Lysine 126 is modified (N6-succinyllysine). A Phosphotyrosine modification is found at tyrosine 138.

The protein belongs to the universal ribosomal protein uL30 family. Component of the large ribosomal subunit. Homodimer. Interacts with DHX33.

The protein localises to the cytoplasm. Component of the large ribosomal subunit. The ribosome is a large ribonucleoprotein complex responsible for the synthesis of proteins in the cell. Binds to G-rich structures in 28S rRNA and in mRNAs. Plays a regulatory role in the translation apparatus; inhibits cell-free translation of mRNAs. The chain is Large ribosomal subunit protein uL30 (RPL7) from Pongo abelii (Sumatran orangutan).